Consider the following 122-residue polypeptide: APPPVGDQAGGRKVDCFKYNTTGSAFACTRHERPVCGTDHRTYSNECMFCMLTQNKGFGVRILQDNECDIECTQYSDMCTMEYLPLCGSDGKNYSNKCLFCNAVMGSRGALFLAKHGQCQSP.

2 consecutive Kazal-like domains span residues 10 to 70 (GGRK…ECDI) and 71 to 121 (ECTQ…QCQS). 6 disulfides stabilise this stretch: C16–C50, C28–C47, C36–C68, C72–C101, C79–C98, and C87–C119.

It is found in the secreted. Functionally, this inhibitor is composed of two homologous actively inhibiting halves: one which inhibits trypsin, the other which inhibits elastase. The sequence is that of Double-headed protease inhibitor, submandibular gland from Martes martes (European pine marten).